The following is a 974-amino-acid chain: Valine--tRNA ligase, chloroplastic/mitochondrial 2 (974 aa).

Residues 109–119 (PNVTGSLHMGH) carry the 'HIGH' region motif. The stretch at 432–454 (LAEKALLAVENKELTIIPERFEK) is one LRR 1 repeat. Residues 489-518 (EEDYIVAKSAEEALEKALEKYGKDVEIYQD) adopt a coiled-coil conformation. Positions 598 to 602 (KMSKS) match the 'KMSKS' region motif. Lys-601 lines the ATP pocket. One copy of the LRR 2 repeat lies at 857-880 (LALLSRLDLNNVHFSNAPPGDANL).

The protein belongs to the class-I aminoacyl-tRNA synthetase family.

The protein resides in the plastid. The protein localises to the chloroplast. Its subcellular location is the mitochondrion. It catalyses the reaction tRNA(Val) + L-valine + ATP = L-valyl-tRNA(Val) + AMP + diphosphate. The polypeptide is Valine--tRNA ligase, chloroplastic/mitochondrial 2 (Arabidopsis thaliana (Mouse-ear cress)).